A 393-amino-acid chain; its full sequence is Argininosuccinate synthase (393 aa).

ATP is bound by residues 10–18 and alanine 37; that span reads AYSGGLDTS. Residue tyrosine 88 participates in L-citrulline binding. An ATP-binding site is contributed by glycine 118. Residues threonine 120, asparagine 124, and aspartate 125 each contribute to the L-aspartate site. Asparagine 124 contacts L-citrulline. Arginine 128, serine 176, serine 185, glutamate 261, and tyrosine 273 together coordinate L-citrulline.

This sequence belongs to the argininosuccinate synthase family. Type 1 subfamily. In terms of assembly, homotetramer.

It is found in the cytoplasm. It carries out the reaction L-citrulline + L-aspartate + ATP = 2-(N(omega)-L-arginino)succinate + AMP + diphosphate + H(+). It participates in amino-acid biosynthesis; L-arginine biosynthesis; L-arginine from L-ornithine and carbamoyl phosphate: step 2/3. The sequence is that of Argininosuccinate synthase from Carsonella ruddii (strain PV).